Reading from the N-terminus, the 169-residue chain is ATP synthase subunit b (169 aa).

The chain crosses the membrane as a helical span at residues 26 to 46 (FFFVLLIFLIVLGVIAKWVVP).

It belongs to the ATPase B chain family. As to quaternary structure, F-type ATPases have 2 components, F(1) - the catalytic core - and F(0) - the membrane proton channel. F(1) has five subunits: alpha(3), beta(3), gamma(1), delta(1), epsilon(1). F(0) has three main subunits: a(1), b(2) and c(10-14). The alpha and beta chains form an alternating ring which encloses part of the gamma chain. F(1) is attached to F(0) by a central stalk formed by the gamma and epsilon chains, while a peripheral stalk is formed by the delta and b chains.

It is found in the cell membrane. In terms of biological role, f(1)F(0) ATP synthase produces ATP from ADP in the presence of a proton or sodium gradient. F-type ATPases consist of two structural domains, F(1) containing the extramembraneous catalytic core and F(0) containing the membrane proton channel, linked together by a central stalk and a peripheral stalk. During catalysis, ATP synthesis in the catalytic domain of F(1) is coupled via a rotary mechanism of the central stalk subunits to proton translocation. Component of the F(0) channel, it forms part of the peripheral stalk, linking F(1) to F(0). This Mycobacterium sp. (strain JLS) protein is ATP synthase subunit b.